Here is a 206-residue protein sequence, read N- to C-terminus: ATP phosphoribosyltransferase (206 aa).

The protein belongs to the ATP phosphoribosyltransferase family. Short subfamily. In terms of assembly, heteromultimer composed of HisG and HisZ subunits.

The protein localises to the cytoplasm. The enzyme catalyses 1-(5-phospho-beta-D-ribosyl)-ATP + diphosphate = 5-phospho-alpha-D-ribose 1-diphosphate + ATP. Its pathway is amino-acid biosynthesis; L-histidine biosynthesis; L-histidine from 5-phospho-alpha-D-ribose 1-diphosphate: step 1/9. Its function is as follows. Catalyzes the condensation of ATP and 5-phosphoribose 1-diphosphate to form N'-(5'-phosphoribosyl)-ATP (PR-ATP). Has a crucial role in the pathway because the rate of histidine biosynthesis seems to be controlled primarily by regulation of HisG enzymatic activity. This is ATP phosphoribosyltransferase from Wolinella succinogenes (strain ATCC 29543 / DSM 1740 / CCUG 13145 / JCM 31913 / LMG 7466 / NCTC 11488 / FDC 602W) (Vibrio succinogenes).